The primary structure comprises 281 residues: Bifunctional protein FolD (281 aa).

Residues Gly164 to Ser166, Ile189, and Ile230 each bind NADP(+).

This sequence belongs to the tetrahydrofolate dehydrogenase/cyclohydrolase family. In terms of assembly, homodimer.

It carries out the reaction (6R)-5,10-methylene-5,6,7,8-tetrahydrofolate + NADP(+) = (6R)-5,10-methenyltetrahydrofolate + NADPH. The enzyme catalyses (6R)-5,10-methenyltetrahydrofolate + H2O = (6R)-10-formyltetrahydrofolate + H(+). It functions in the pathway one-carbon metabolism; tetrahydrofolate interconversion. Catalyzes the oxidation of 5,10-methylenetetrahydrofolate to 5,10-methenyltetrahydrofolate and then the hydrolysis of 5,10-methenyltetrahydrofolate to 10-formyltetrahydrofolate. In Sulfurovum sp. (strain NBC37-1), this protein is Bifunctional protein FolD.